The following is a 332-amino-acid chain: Palmitoyltransferase PFA3 (332 aa).

Topologically, residues 1 to 13 (MNLVNNFSKLFPR) are cytoplasmic. The helical transmembrane segment at 14 to 34 (CLTTGLYLWSLYAIVVCIHVI) threads the bilayer. At 35 to 37 (RAR) the chain is on the lumenal side. A helical membrane pass occupies residues 38-58 (VVLPLVFTIAMVALYTYAKLI). Over 59-147 (YVGPGTTKEY…AGCVGYRNQK (89 aa)) the chain is Cytoplasmic. In terms of domain architecture, DHHC spans 104–154 (RVCKSCSSWKPDRCHHCSTCNVCVLKMDHHCPWFAGCVGYRNQKFFIQFLI). Residues 148 to 168 (FFIQFLIYCTVYSILVLILSS) traverse the membrane as a helical segment. Residues 169-188 (MEIYTWFKGEFFEVELINFT) lie on the Lumenal side of the membrane. A helical transmembrane segment spans residues 189–209 (LLSLWLLALVVSISITIFTVF). The Cytoplasmic segment spans residues 210–332 (SISQVCQNQT…SLDVDRSNFV (123 aa)).

Belongs to the DHHC palmitoyltransferase family. PFA3 subfamily. Autopalmitoylated.

The protein localises to the vacuole membrane. It carries out the reaction L-cysteinyl-[protein] + hexadecanoyl-CoA = S-hexadecanoyl-L-cysteinyl-[protein] + CoA. Its function is as follows. Palmitoyltransferase specific for VAC8. Palmitoylates VAC8 at one or more of its N-terminal cysteine residues, which is required for its proper membrane localization. This Candida glabrata (strain ATCC 2001 / BCRC 20586 / JCM 3761 / NBRC 0622 / NRRL Y-65 / CBS 138) (Yeast) protein is Palmitoyltransferase PFA3 (PFA3).